A 192-amino-acid polypeptide reads, in one-letter code: Ribosome maturation factor RimM (192 aa).

The region spanning 116 to 192 (PGEYYWVDLI…RIIVDWQPDY (77 aa)) is the PRC barrel domain.

Belongs to the RimM family. In terms of assembly, binds ribosomal protein uS19.

The protein resides in the cytoplasm. In terms of biological role, an accessory protein needed during the final step in the assembly of 30S ribosomal subunit, possibly for assembly of the head region. Essential for efficient processing of 16S rRNA. May be needed both before and after RbfA during the maturation of 16S rRNA. It has affinity for free ribosomal 30S subunits but not for 70S ribosomes. This is Ribosome maturation factor RimM from Verminephrobacter eiseniae (strain EF01-2).